The following is a 188-amino-acid chain: Elongation factor P (188 aa).

It belongs to the elongation factor P family.

The protein localises to the cytoplasm. The protein operates within protein biosynthesis; polypeptide chain elongation. Functionally, involved in peptide bond synthesis. Stimulates efficient translation and peptide-bond synthesis on native or reconstituted 70S ribosomes in vitro. Probably functions indirectly by altering the affinity of the ribosome for aminoacyl-tRNA, thus increasing their reactivity as acceptors for peptidyl transferase. This is Elongation factor P from Bradyrhizobium diazoefficiens (strain JCM 10833 / BCRC 13528 / IAM 13628 / NBRC 14792 / USDA 110).